Here is a 294-residue protein sequence, read N- to C-terminus: Phosphate import ATP-binding protein PstB (294 aa).

Residues 1 to 18 (MSETMTNQNVVNEEQPFN) show a composition bias toward polar residues. Positions 1-24 (MSETMTNQNVVNEEQPFNESKHRS) are disordered. The 242-residue stretch at 48–289 (LEVNKLKLFY…PSCKQTEDYI (242 aa)) folds into the ABC transporter domain. 80-87 (GPSGCGKS) serves as a coordination point for ATP.

Belongs to the ABC transporter superfamily. Phosphate importer (TC 3.A.1.7) family. In terms of assembly, the complex is composed of two ATP-binding proteins (PstB), two transmembrane proteins (PstC and PstA) and a solute-binding protein (PstS).

It localises to the cell inner membrane. It carries out the reaction phosphate(out) + ATP + H2O = ADP + 2 phosphate(in) + H(+). Its function is as follows. Part of the ABC transporter complex PstSACB involved in phosphate import. Responsible for energy coupling to the transport system. This is Phosphate import ATP-binding protein PstB from Hahella chejuensis (strain KCTC 2396).